We begin with the raw amino-acid sequence, 258 residues long: Small ribosomal subunit protein uS15m (258 aa).

A mitochondrion-targeting transit peptide spans 1–57 (MLRAAWRALSSVRAQAVTRAPVPALRGGSSASLLSARCGLQPPSLLRAARAYAAVQK). Positions 229-258 (KAAAAAAKKEKNEGVPENPSNAVPEKTQVN) are disordered.

The protein belongs to the universal ribosomal protein uS15 family. Component of the mitochondrial ribosome small subunit (28S) which comprises a 12S rRNA and about 30 distinct proteins. Interacts with METTL17.

The protein resides in the mitochondrion matrix. This Mus musculus (Mouse) protein is Small ribosomal subunit protein uS15m (Mrps15).